Reading from the N-terminus, the 461-residue chain is Photosystem II CP43 reaction center protein (461 aa).

The propeptide occupies 1 to 2 (ME). N-acetylthreonine is present on Thr-3. Thr-3 bears the Phosphothreonine mark. A run of 5 helical transmembrane segments spans residues 57-81 (LFEVAHFVPEKPMYEQGLILLPHLA), 122-143 (LLGPETLEESFPFFGYVWKDRN), 166-188 (KALYFGGVYDTWAPGGGDVRKIT), 243-263 (KPFAWARRALVWSGEAYLSYS), and 279-300 (WFNNTAYPSEFYGPTGPEASQA). Glu-355 lines the [CaMn4O5] cluster pocket. A helical membrane pass occupies residues 435–459 (RARAAAAGFEKGIDRDLEPVLFMTP).

The protein belongs to the PsbB/PsbC family. PsbC subfamily. In terms of assembly, PSII is composed of 1 copy each of membrane proteins PsbA, PsbB, PsbC, PsbD, PsbE, PsbF, PsbH, PsbI, PsbJ, PsbK, PsbL, PsbM, PsbT, PsbX, PsbY, PsbZ, Psb30/Ycf12, at least 3 peripheral proteins of the oxygen-evolving complex and a large number of cofactors. It forms dimeric complexes. It depends on Binds multiple chlorophylls and provides some of the ligands for the Ca-4Mn-5O cluster of the oxygen-evolving complex. It may also provide a ligand for a Cl- that is required for oxygen evolution. PSII binds additional chlorophylls, carotenoids and specific lipids. as a cofactor.

The protein resides in the plastid. It is found in the chloroplast thylakoid membrane. Functionally, one of the components of the core complex of photosystem II (PSII). It binds chlorophyll and helps catalyze the primary light-induced photochemical processes of PSII. PSII is a light-driven water:plastoquinone oxidoreductase, using light energy to abstract electrons from H(2)O, generating O(2) and a proton gradient subsequently used for ATP formation. The protein is Photosystem II CP43 reaction center protein of Nandina domestica (Heavenly bamboo).